A 330-amino-acid chain; its full sequence is 5'-AMP-activated protein kinase subunit gamma-1 (330 aa).

The interval 1-24 (MEAVPSSDSYPAVENEHLQETPES) is disordered. 3 consecutive CBS domains span residues 43-103 (PTSS…KSAL), 125-187 (SFKP…PKPE), and 198-260 (IGTY…NLDV). ADP contacts are provided by residues Arg70, 85–90 (MLTITD), Val130, 151–152 (HR), and Lys170. AMP is bound by residues Arg70, 85–90 (MLTITD), Val130, His151, 151–152 (HR), Lys170, Thr200, Ala205, 226–227 (SA), and 242–245 (SKFD). ATP is bound by residues Arg70, 85–90 (MLTITD), Val130, 151–152 (HR), Arg152, and Lys170. The AMPK pseudosubstrate motif lies at 138–159 (LFDAVSSLIRNKIHRLPVIDPE). Position 242 to 245 (242 to 245 (SKFD)) interacts with ADP. Residue 242 to 245 (SKFD) coordinates ATP. A Phosphoserine; by ULK1 modification is found at Ser261. Thr263 is subject to Phosphothreonine; by ULK1. Residue Arg269 participates in ADP binding. AMP is bound at residue Arg269. Arg269 is a binding site for ATP. Ser270 carries the phosphoserine; by ULK1 modification. The 58-residue stretch at 272–329 (YFEGVLKCYLHETLETIINRLVEAEVHRLVVVDENDVVKGIVSLSDILQALVLTGGEK) folds into the CBS 4 domain. Residues Leu277 and 298 to 299 (HR) contribute to the ADP site. AMP-binding positions include Leu277, His298, 298-299 (HR), and 314-317 (SLSD). ATP is bound by residues Leu277 and 298–299 (HR).

This sequence belongs to the 5'-AMP-activated protein kinase gamma subunit family. AMPK is a heterotrimer of an alpha catalytic subunit (PRKAA1 or PRKAA2), a beta (PRKAB1 or PRKAB2) and a gamma non-catalytic subunits (PRKAG1, PRKAG2 or PRKAG3). Interacts with FNIP1 and FNIP2. In terms of processing, phosphorylated by ULK1 and ULK2; leading to negatively regulate AMPK activity and suggesting the existence of a regulatory feedback loop between ULK1, ULK2 and AMPK. Glycosylated; O-GlcNAcylated by OGT, promoting the AMP-activated protein kinase (AMPK) activity.

AMP/ATP-binding subunit of AMP-activated protein kinase (AMPK), an energy sensor protein kinase that plays a key role in regulating cellular energy metabolism. In response to reduction of intracellular ATP levels, AMPK activates energy-producing pathways and inhibits energy-consuming processes: inhibits protein, carbohydrate and lipid biosynthesis, as well as cell growth and proliferation. AMPK acts via direct phosphorylation of metabolic enzymes, and by longer-term effects via phosphorylation of transcription regulators. Also acts as a regulator of cellular polarity by remodeling the actin cytoskeleton; probably by indirectly activating myosin. Gamma non-catalytic subunit mediates binding to AMP, ADP and ATP, leading to activate or inhibit AMPK: AMP-binding results in allosteric activation of alpha catalytic subunit (PRKAA1 or PRKAA2) both by inducing phosphorylation and preventing dephosphorylation of catalytic subunits. ADP also stimulates phosphorylation, without stimulating already phosphorylated catalytic subunit. ATP promotes dephosphorylation of catalytic subunit, rendering the AMPK enzyme inactive. This Bos taurus (Bovine) protein is 5'-AMP-activated protein kinase subunit gamma-1 (PRKAG1).